Reading from the N-terminus, the 313-residue chain is GTP cyclohydrolase 1 (313 aa).

The span at Met1 to Ser10 shows a compositional bias: basic and acidic residues. The tract at residues Met1–Glu120 is disordered. Positions Asp11 to Pro20 are enriched in low complexity. Basic residues predominate over residues Lys29–His39. Positions Ser40–Ser64 are enriched in basic and acidic residues. The span at Thr72–Ile102 shows a compositional bias: low complexity. Positions 202, 205, and 273 each coordinate Zn(2+).

It belongs to the GTP cyclohydrolase I family. In terms of assembly, toroid-shaped homodecamer, composed of two pentamers of five dimers.

It carries out the reaction GTP + H2O = 7,8-dihydroneopterin 3'-triphosphate + formate + H(+). Its pathway is cofactor biosynthesis; 7,8-dihydroneopterin triphosphate biosynthesis; 7,8-dihydroneopterin triphosphate from GTP: step 1/1. Its activity is regulated as follows. GTP shows a positive allosteric effect, and tetrahydrobiopterin inhibits the enzyme activity. Functionally, GTP cyclohydrolase 1 is the first enzyme in the biosynthetic pathway leading to folic acid. The chain is GTP cyclohydrolase 1 (gch-1) from Neurospora crassa (strain ATCC 24698 / 74-OR23-1A / CBS 708.71 / DSM 1257 / FGSC 987).